We begin with the raw amino-acid sequence, 303 residues long: Rhomboid-related protein 2 (303 aa).

Residues Met-20 to Arg-39 are disordered. Basic and acidic residues predominate over residues Glu-28–Arg-39. The next 7 membrane-spanning stretches (helical) occupy residues Pro-72 to Trp-92, Leu-128 to Ile-148, Val-159 to Pro-179, Leu-183 to Val-203, Phe-212 to Leu-232, Val-245 to Phe-265, and Phe-278 to Phe-298. Ser-187 serves as the catalytic Nucleophile. The active site involves His-250.

It belongs to the peptidase S54 family. Post-translationally, proteolytic processing of the proenzyme produces a N-terminal fragment (NTF) and a C-terminal fragment (CTF). The processing is required for activation of the protease.

Its subcellular location is the cell membrane. The enzyme catalyses Cleaves type-1 transmembrane domains using a catalytic dyad composed of serine and histidine that are contributed by different transmembrane domains.. Involved in regulated intramembrane proteolysis and the subsequent release of functional polypeptides from their membrane anchors. Known substrate: EFNB3. This is Rhomboid-related protein 2 (RHBDL2) from Homo sapiens (Human).